We begin with the raw amino-acid sequence, 360 residues long: Photosystem II protein D1 2 (360 aa).

Helical transmembrane passes span 29 to 46 (YIGW…SATI), 118 to 133 (HFLI…EWEF), and 142 to 156 (WICV…AATA). H118 contributes to the chlorophyll a binding site. Residue Y126 participates in pheophytin a binding. 2 residues coordinate [CaMn4O5] cluster: D170 and E189. The chain crosses the membrane as a helical span at residues 197–218 (LHMFGVAGVFGGSLFAAMHGSL). Residue H198 participates in chlorophyll a binding. Residues H215 and 264-265 (SF) contribute to the a quinone site. H215 contacts Fe cation. A Fe cation-binding site is contributed by H272. The helical transmembrane segment at 274 to 288 (FLAAWPVIGIWLTSL) threads the bilayer. [CaMn4O5] cluster is bound by residues H332, E333, D342, and A344. The propeptide occupies 345–360 (GTESAPVAFAAALGDG).

It belongs to the reaction center PufL/M/PsbA/D family. As to quaternary structure, PSII is composed of 1 copy each of membrane proteins PsbA, PsbB, PsbC, PsbD, PsbE, PsbF, PsbH, PsbI, PsbJ, PsbK, PsbL, PsbM, PsbT, PsbX, Psb30/Ycf12, peripheral proteins PsbO, CyanoQ (PsbQ), PsbU, PsbV and a large number of cofactors. It forms dimeric complexes. It depends on The D1/D2 heterodimer binds P680, chlorophylls that are the primary electron donor of PSII, and subsequent electron acceptors. It shares a non-heme iron and each subunit binds pheophytin, quinone, additional chlorophylls, carotenoids and lipids. D1 provides most of the ligands for the Mn4-Ca-O5 cluster of the oxygen-evolving complex (OEC). There is also a Cl(-1) ion associated with D1 and D2, which is required for oxygen evolution. The PSII complex binds additional chlorophylls, carotenoids and specific lipids. as a cofactor. Post-translationally, tyr-161 forms a radical intermediate that is referred to as redox-active TyrZ, YZ or Y-Z. In terms of processing, C-terminally processed by CtpA; processing is essential to allow assembly of the oxygen-evolving complex and thus photosynthetic growth.

Its subcellular location is the cell inner membrane. The enzyme catalyses 2 a plastoquinone + 4 hnu + 2 H2O = 2 a plastoquinol + O2. In terms of biological role, photosystem II (PSII) is a light-driven water:plastoquinone oxidoreductase that uses light energy to abstract electrons from H(2)O, generating O(2) and a proton gradient subsequently used for ATP formation. It consists of a core antenna complex that captures photons, and an electron transfer chain that converts photonic excitation into a charge separation. The D1/D2 (PsbA/PsbD) reaction center heterodimer binds P680, the primary electron donor of PSII as well as several subsequent electron acceptors. In Gloeobacter violaceus (strain ATCC 29082 / PCC 7421), this protein is Photosystem II protein D1 2.